The chain runs to 385 residues: 1-deoxy-D-xylulose 5-phosphate reductoisomerase 1 (385 aa).

NADPH contacts are provided by Thr-11, Gly-12, Ser-13, Ile-14, Asn-39, and Asn-122. Lys-123 serves as a coordination point for 1-deoxy-D-xylulose 5-phosphate. Glu-124 contacts NADPH. Asp-148 provides a ligand contact to Mn(2+). 4 residues coordinate 1-deoxy-D-xylulose 5-phosphate: Ser-149, Glu-150, Ser-174, and His-197. A Mn(2+)-binding site is contributed by Glu-150. Position 203 (Gly-203) interacts with NADPH. 1-deoxy-D-xylulose 5-phosphate is bound by residues Ser-210, Asn-215, Lys-216, and Glu-219. Glu-219 lines the Mn(2+) pocket.

This sequence belongs to the DXR family. Requires Mg(2+) as cofactor. Mn(2+) serves as cofactor.

The enzyme catalyses 2-C-methyl-D-erythritol 4-phosphate + NADP(+) = 1-deoxy-D-xylulose 5-phosphate + NADPH + H(+). It functions in the pathway isoprenoid biosynthesis; isopentenyl diphosphate biosynthesis via DXP pathway; isopentenyl diphosphate from 1-deoxy-D-xylulose 5-phosphate: step 1/6. Functionally, catalyzes the NADPH-dependent rearrangement and reduction of 1-deoxy-D-xylulose-5-phosphate (DXP) to 2-C-methyl-D-erythritol 4-phosphate (MEP). This is 1-deoxy-D-xylulose 5-phosphate reductoisomerase 1 from Bacillus thuringiensis subsp. konkukian (strain 97-27).